The sequence spans 129 residues: uncharacterized protein (129 aa).

A compositionally biased stretch (basic residues) spans 84–98 (QKTVSKKYKSRKGRR). The interval 84–129 (QKTVSKKYKSRKGRRYTRERNISSEKNKTDKSHKVRVGKIQNINND) is disordered. The span at 99–115 (YTRERNISSEKNKTDKS) shows a compositional bias: basic and acidic residues.

This is an uncharacterized protein from Acanthamoeba polyphaga mimivirus (APMV).